The chain runs to 917 residues: Chitin synthase 1 (917 aa).

The segment covering 1–11 (MAYHGRGDGYD) has biased composition (basic and acidic residues). The disordered stretch occupies residues 1–56 (MAYHGRGDGYDGHQLQDLPGGHNQGDQHDDAQAPFLSENPMPYDNDRLGTDTPPVR). The Extracellular portion of the chain corresponds to 1-570 (MAYHGRGDGY…YKSGHNIVRM (570 aa)). Asn-544 carries an N-linked (GlcNAc...) asparagine glycan. The helical transmembrane segment at 571–591 (FFFHVQLIYNIANVIFTWFSL) threads the bilayer. Over 592-629 (ASYWLTTTVIMDLVGTPVTASSSSAEHHGWPFGDTVTP) the chain is Cytoplasmic. A helical membrane pass occupies residues 630 to 650 (FFNAVLKYIYLAFVILQFILA). The Extracellular portion of the chain corresponds to 651 to 664 (LGNRPKGSKWTYIT). The helical transmembrane segment at 665-685 (SFFVFSLIQSYILVLSGYLVA) threads the bilayer. The Cytoplasmic segment spans residues 686–716 (RAFSVPLDQQLQLDNAKDAMASLFGGSGSAG). The helical transmembrane segment at 717–737 (VILVALVTIYGLYFLASFMYL) threads the bilayer. At 738–744 (DPWHMFH) the chain is on the extracellular side. A helical membrane pass occupies residues 745–765 (SFPYYMLLMSTYINILMIYAF). The Cytoplasmic portion of the chain corresponds to 766 to 843 (NNWHDVSWGT…DLEDSYKSFR (78 aa)). Residues 844-864 (TMLVVSWLFSNCLLAVVITSD) traverse the membrane as a helical segment. Residues 865 to 884 (NFNTFGIGQTASARTAWFFK) lie on the Extracellular side of the membrane. The helical transmembrane segment at 885 to 905 (FLLFATGALSVIRFIGFCWFL) threads the bilayer. Residues 906–917 (GRTGIMCCFARR) lie on the Cytoplasmic side of the membrane.

This sequence belongs to the chitin synthase family. Class III subfamily.

The protein localises to the cell membrane. It carries out the reaction [(1-&gt;4)-N-acetyl-beta-D-glucosaminyl](n) + UDP-N-acetyl-alpha-D-glucosamine = [(1-&gt;4)-N-acetyl-beta-D-glucosaminyl](n+1) + UDP + H(+). Functionally, polymerizes chitin, a structural polymer of the cell wall and septum, by transferring the sugar moiety of UDP-GlcNAc to the non-reducing end of the growing chitin polymer. This chain is Chitin synthase 1 (chs-1), found in Neurospora crassa (strain ATCC 24698 / 74-OR23-1A / CBS 708.71 / DSM 1257 / FGSC 987).